The chain runs to 145 residues: Protein SprT-like (145 aa).

The 137-residue stretch at 4–140 folds into the SprT-like domain; it reads TNYVQEVSLA…VCGNCHGKLI (137 aa). His-64 contributes to the Zn(2+) binding site. Glu-65 is an active-site residue. His-68 serves as a coordination point for Zn(2+).

Belongs to the SprT family. It depends on Zn(2+) as a cofactor.

It is found in the cytoplasm. This chain is Protein SprT-like, found in Streptococcus pyogenes serotype M18 (strain MGAS8232).